Here is a 477-residue protein sequence, read N- to C-terminus: Bifunctional protein HldE (477 aa).

The ribokinase stretch occupies residues 1–318 (MKVTLPEFER…ENAVRGRADT (318 aa)). Lysine 179 carries the post-translational modification N6-acetyllysine. Residue 195 to 198 (NLSE) coordinates ATP. Aspartate 264 is a catalytic residue. The interval 344-477 (MTNGVFDILH…IKKIQQDKKG (134 aa)) is cytidylyltransferase.

The protein in the N-terminal section; belongs to the carbohydrate kinase PfkB family. In the C-terminal section; belongs to the cytidylyltransferase family. As to quaternary structure, homodimer.

The enzyme catalyses D-glycero-beta-D-manno-heptose 7-phosphate + ATP = D-glycero-beta-D-manno-heptose 1,7-bisphosphate + ADP + H(+). The catalysed reaction is D-glycero-beta-D-manno-heptose 1-phosphate + ATP + H(+) = ADP-D-glycero-beta-D-manno-heptose + diphosphate. It functions in the pathway nucleotide-sugar biosynthesis; ADP-L-glycero-beta-D-manno-heptose biosynthesis; ADP-L-glycero-beta-D-manno-heptose from D-glycero-beta-D-manno-heptose 7-phosphate: step 1/4. The protein operates within nucleotide-sugar biosynthesis; ADP-L-glycero-beta-D-manno-heptose biosynthesis; ADP-L-glycero-beta-D-manno-heptose from D-glycero-beta-D-manno-heptose 7-phosphate: step 3/4. Functionally, catalyzes the phosphorylation of D-glycero-D-manno-heptose 7-phosphate at the C-1 position to selectively form D-glycero-beta-D-manno-heptose-1,7-bisphosphate. In terms of biological role, catalyzes the ADP transfer from ATP to D-glycero-beta-D-manno-heptose 1-phosphate, yielding ADP-D-glycero-beta-D-manno-heptose. The polypeptide is Bifunctional protein HldE (Escherichia fergusonii (strain ATCC 35469 / DSM 13698 / CCUG 18766 / IAM 14443 / JCM 21226 / LMG 7866 / NBRC 102419 / NCTC 12128 / CDC 0568-73)).